Here is a 561-residue protein sequence, read N- to C-terminus: SUN domain-containing protein 5 (561 aa).

Residues 36 to 56 form a helical membrane-spanning segment; it reads GSFFERSISLVLLLWCFLFLV. Residues 158-318 form the SUN domain; that stretch reads NGSSQLVNNG…SVVEVFGIDA (161 aa). A disordered region spans residues 345 to 367; that stretch reads ADEKQDGEIKSNRTDQIGKETEA. A coiled-coil region spans residues 454 to 499; the sequence is MEKELRDLELWKTLVASRVESLARGNSALRLDVEKIVKEQANLESK. The next 2 helical transmembrane spans lie at 501–521 and 540–560; these read LGVLLISLFFVVLATIRLVST and PDSGWVMILLSSSIMIFIHLL.

Forms homomers. Interacts with SUN3 and TIK.

Its subcellular location is the membrane. Its function is as follows. Encodes a member of the mid-SUN subfamily of SUN-domain proteins. It is involved in early seed development and nuclear morphology. [TAIR]. The polypeptide is SUN domain-containing protein 5 (Arabidopsis thaliana (Mouse-ear cress)).